Consider the following 549-residue polypeptide: MAAKDVIFGGEARARMVEGVNILANAVKVTLGPKGRNVVLERSFGAPTVTKDGVSVAKEIELKDKLQNMGAQMVKEVASKTSDNAGDGTTTATVLAQAIVREGMKYVAAGMNPMDLKRGIDKAVHALVAELKKASKATTTSKEIAQVGSISANSDESIGTIIANAMDKVGKEGVITVEDGKSLDNELDVVEGMQFDRGYLSPYFINNPEKQAALLDNPFVLLFDKKISNIRDLLPTLEQVAKAGRPLLIIAEEVDGEALATLVVNTIRGILKVVAVKAPGFGDRRKAMLEDIAILTGGKVIAEEVGLTLEKVTLADLGQAKRVEVGKENTTIIDGAGAAGDIEARVKQIRIQIEEATSDYDREKLQERVAKLAGGVALIKVGAATEVEMKEKKARVEDALHATRAAVEEGIVAGGGVALLRAKQAAGEIKGDNADQDAGIKLVLKAIEAPLREIVYNAGGEASVVVNAVLAGSGNYGFNAANDTYGDMIEMGILDPTKVTRTALQNAASVASLMLTTECMVAEAPKDEAAGGGMPGGMGGMGGMGGMDM.

ATP is bound by residues 30-33 (TLGP), K51, 87-91 (DGTTT), G415, 479-481 (NAA), and D495.

It belongs to the chaperonin (HSP60) family. As to quaternary structure, forms a cylinder of 14 subunits composed of two heptameric rings stacked back-to-back. Interacts with the co-chaperonin GroES.

It localises to the cytoplasm. It catalyses the reaction ATP + H2O + a folded polypeptide = ADP + phosphate + an unfolded polypeptide.. Functionally, together with its co-chaperonin GroES, plays an essential role in assisting protein folding. The GroEL-GroES system forms a nano-cage that allows encapsulation of the non-native substrate proteins and provides a physical environment optimized to promote and accelerate protein folding. This chain is Chaperonin GroEL, found in Leptothrix cholodnii (strain ATCC 51168 / LMG 8142 / SP-6) (Leptothrix discophora (strain SP-6)).